An 87-amino-acid chain; its full sequence is Small ribosomal subunit protein bS20 (87 aa).

The tract at residues 1–25 (MANTAQARKRARQSVQRNKHNSSLR) is disordered. The segment covering 7 to 22 (ARKRARQSVQRNKHNS) has biased composition (basic residues).

This sequence belongs to the bacterial ribosomal protein bS20 family.

In terms of biological role, binds directly to 16S ribosomal RNA. The chain is Small ribosomal subunit protein bS20 from Bordetella bronchiseptica (strain ATCC BAA-588 / NCTC 13252 / RB50) (Alcaligenes bronchisepticus).